The chain runs to 892 residues: Alanine--tRNA ligase (892 aa).

Zn(2+)-binding residues include H580, H584, C682, and H686.

Belongs to the class-II aminoacyl-tRNA synthetase family. The cofactor is Zn(2+).

It localises to the cytoplasm. It catalyses the reaction tRNA(Ala) + L-alanine + ATP = L-alanyl-tRNA(Ala) + AMP + diphosphate. Its function is as follows. Catalyzes the attachment of alanine to tRNA(Ala) in a two-step reaction: alanine is first activated by ATP to form Ala-AMP and then transferred to the acceptor end of tRNA(Ala). Also edits incorrectly charged Ser-tRNA(Ala) and Gly-tRNA(Ala) via its editing domain. The protein is Alanine--tRNA ligase of Salinispora tropica (strain ATCC BAA-916 / DSM 44818 / JCM 13857 / NBRC 105044 / CNB-440).